Consider the following 108-residue polypeptide: Glutaredoxin 4 (108 aa).

Positions 5 to 107 constitute a Glutaredoxin domain; that stretch reads IKKIQNQIQN…KTISICDKLN (103 aa). Residue K22 coordinates glutathione. Residue C30 coordinates [2Fe-2S] cluster. Glutathione-binding positions include R59, F71, and 84–85; that span reads CN.

Belongs to the glutaredoxin family. Monothiol subfamily. Homodimer.

It is found in the cytoplasm. Monothiol glutaredoxin involved in the biogenesis of iron-sulfur clusters. This Buchnera aphidicola subsp. Baizongia pistaciae (strain Bp) protein is Glutaredoxin 4 (grxD).